The following is a 142-amino-acid chain: Hemoglobin subunit alpha-A (142 aa).

Residues 2-142 (VLSGSDKTNV…VGNVLTAKYR (141 aa)) form the Globin domain. Residue His-59 coordinates O2. Residue His-88 participates in heme b binding.

This sequence belongs to the globin family. Heterotetramer of two alpha chains and two beta chains. Red blood cells.

Its function is as follows. Involved in oxygen transport from the lung to the various peripheral tissues. The sequence is that of Hemoglobin subunit alpha-A (HBAA) from Ara ararauna (Blue-and-yellow macaw).